The chain runs to 407 residues: Serine/threonine transporter SstT (407 aa).

Helical transmembrane passes span 10 to 30, 42 to 62, 81 to 101, 141 to 161, 179 to 199, 218 to 238, 245 to 267, 288 to 308, and 316 to 336; these read AKGNLIIQICAGIALGILIGI, LGILFTSALKAIAPMLVFILI, IIILYIVGTFLASACAILANF, ALSSGNYLGILTWAIAGGAAL, VLKIVKFVVKLAPFGIFGLVA, ILLVATMLFVTFVINALIVFF, FPLIFICLRHSAFFAFFTRSSAA, ISIPLGATINMAGAAVTIAIL, and VGIEISLLQAFLLSIIATFAA.

It belongs to the dicarboxylate/amino acid:cation symporter (DAACS) (TC 2.A.23) family.

The protein localises to the cell inner membrane. It carries out the reaction L-serine(in) + Na(+)(in) = L-serine(out) + Na(+)(out). It catalyses the reaction L-threonine(in) + Na(+)(in) = L-threonine(out) + Na(+)(out). Its function is as follows. Involved in the import of serine and threonine into the cell, with the concomitant import of sodium (symport system). This is Serine/threonine transporter SstT from Campylobacter jejuni subsp. doylei (strain ATCC BAA-1458 / RM4099 / 269.97).